Consider the following 469-residue polypeptide: Glutamate--tRNA ligase (469 aa).

A 'HIGH' region motif is present at residues 9-19; sequence PSPTGFLHVGG. Cys98, Cys100, Cys125, and Asp127 together coordinate Zn(2+). Residues 236-240 carry the 'KMSKS' region motif; it reads KLSKR. Lys239 is an ATP binding site.

Belongs to the class-I aminoacyl-tRNA synthetase family. Glutamate--tRNA ligase type 1 subfamily. Monomer. It depends on Zn(2+) as a cofactor.

Its subcellular location is the cytoplasm. The enzyme catalyses tRNA(Glu) + L-glutamate + ATP = L-glutamyl-tRNA(Glu) + AMP + diphosphate. Catalyzes the attachment of glutamate to tRNA(Glu) in a two-step reaction: glutamate is first activated by ATP to form Glu-AMP and then transferred to the acceptor end of tRNA(Glu). The sequence is that of Glutamate--tRNA ligase from Shewanella putrefaciens (strain CN-32 / ATCC BAA-453).